The following is a 167-amino-acid chain: Phosphopantetheine adenylyltransferase (167 aa).

Residue threonine 9 participates in substrate binding. Residues 9–10 and histidine 17 contribute to the ATP site; that span reads TF. Positions 41, 73, and 87 each coordinate substrate. ATP is bound by residues 88-90, glutamate 98, and 123-129; these read GLR and YQFISGT.

Belongs to the bacterial CoaD family. Homohexamer. Mg(2+) is required as a cofactor.

It localises to the cytoplasm. It carries out the reaction (R)-4'-phosphopantetheine + ATP + H(+) = 3'-dephospho-CoA + diphosphate. The protein operates within cofactor biosynthesis; coenzyme A biosynthesis; CoA from (R)-pantothenate: step 4/5. Reversibly transfers an adenylyl group from ATP to 4'-phosphopantetheine, yielding dephospho-CoA (dPCoA) and pyrophosphate. The chain is Phosphopantetheine adenylyltransferase from Ralstonia pickettii (strain 12J).